An 810-amino-acid polypeptide reads, in one-letter code: Soluble starch synthase 2-3, chloroplastic/amyloplastic (810 aa).

Residues 1–16 (MSSAVVASSTTFLVAL) constitute a chloroplast transit peptide. Disordered regions lie at residues 43–265 (GRAG…PIPA) and 281–313 (EPDA…SGPL). Residues 63-83 (RDAGVVRRADDGENEAAVERA) show a composition bias toward basic and acidic residues. A compositionally biased stretch (acidic residues) spans 84 to 93 (GEDDEEEEEF). Residues 102–116 (RSRRGGVGKVLKRRG) show a composition bias toward basic residues. Residues 129-148 (DAARVRGAAAPAPAPTQDAA) are compositionally biased toward low complexity. Acidic residues predominate over residues 281 to 310 (EPDAAEDGDDDDDWADSDASDSEIDQDDDS). Position 333 (lysine 333) interacts with ADP-alpha-D-glucose.

The protein belongs to the glycosyltransferase 1 family. Bacterial/plant glycogen synthase subfamily. In terms of tissue distribution, expressed most exclusively in endosperm.

It is found in the plastid. Its subcellular location is the amyloplast. The protein localises to the chloroplast. The enzyme catalyses [(1-&gt;4)-alpha-D-glucosyl](n) + ADP-alpha-D-glucose = [(1-&gt;4)-alpha-D-glucosyl](n+1) + ADP + H(+). It functions in the pathway glycan biosynthesis; starch biosynthesis. Plays an important role during endosperm starch synthesis. Determines the type of amylopectin structure of starch grain. Synthesizes long B1 amylopectin chains by elongating short A and B1 chains, independently of the other soluble starch synthases. Barely active in japonica subspecies. This is Soluble starch synthase 2-3, chloroplastic/amyloplastic (SSII-3) from Oryza sativa subsp. indica (Rice).